We begin with the raw amino-acid sequence, 164 residues long: MTEGKAEKPVVESFQLDHTKVKAPYVRYIDTETGPHGDVISNYDLRLTQPNKQAIPTGGLHTIEHTIAVLLRERIPGYIDCSPFGCRTGFHLLTWGTHSTEDVAKALKESLEFIAYKATWDDVPATTEKSCGNYRDHSLFAAKEWAKQILEEGISSDPFERKVV.

The Fe cation site is built by histidine 61, histidine 65, and cysteine 131.

Belongs to the LuxS family. In terms of assembly, homodimer. Requires Fe cation as cofactor.

It carries out the reaction S-(5-deoxy-D-ribos-5-yl)-L-homocysteine = (S)-4,5-dihydroxypentane-2,3-dione + L-homocysteine. Functionally, involved in the synthesis of autoinducer 2 (AI-2) which is secreted by bacteria and is used to communicate both the cell density and the metabolic potential of the environment. The regulation of gene expression in response to changes in cell density is called quorum sensing. Catalyzes the transformation of S-ribosylhomocysteine (RHC) to homocysteine (HC) and 4,5-dihydroxy-2,3-pentadione (DPD). The polypeptide is S-ribosylhomocysteine lyase (Bifidobacterium longum subsp. infantis (strain ATCC 15697 / DSM 20088 / JCM 1222 / NCTC 11817 / S12)).